A 419-amino-acid chain; its full sequence is UDP-N-acetylglucosamine 1-carboxyvinyltransferase (419 aa).

A phosphoenolpyruvate-binding site is contributed by 22–23; that stretch reads KN. Residue arginine 91 participates in UDP-N-acetyl-alpha-D-glucosamine binding. Cysteine 115 functions as the Proton donor in the catalytic mechanism. The residue at position 115 (cysteine 115) is a 2-(S-cysteinyl)pyruvic acid O-phosphothioketal. Residues 120–124, 160–163, aspartate 305, and valine 327 each bind UDP-N-acetyl-alpha-D-glucosamine; these read RPVDL and KVSV.

This sequence belongs to the EPSP synthase family. MurA subfamily.

Its subcellular location is the cytoplasm. The catalysed reaction is phosphoenolpyruvate + UDP-N-acetyl-alpha-D-glucosamine = UDP-N-acetyl-3-O-(1-carboxyvinyl)-alpha-D-glucosamine + phosphate. It participates in cell wall biogenesis; peptidoglycan biosynthesis. Functionally, cell wall formation. Adds enolpyruvyl to UDP-N-acetylglucosamine. This Escherichia coli O157:H7 protein is UDP-N-acetylglucosamine 1-carboxyvinyltransferase.